The sequence spans 187 residues: Auxin-binding protein T85 (187 aa).

The signal sequence occupies residues 1–20 (MARHVLVVVAVLLFATAEAS). A disulfide bridge connects residues C22 and C177. Zn(2+)-binding residues include H78, H80, and E84. A glycan (N-linked (GlcNAc...) asparagine) is linked at N117. Residue H128 coordinates Zn(2+). Positions 184–187 (KDEL) match the Prevents secretion from ER motif.

As to quaternary structure, homodimer.

Its subcellular location is the endoplasmic reticulum lumen. Functionally, this is probably a receptor for the plant hormone auxin. The polypeptide is Auxin-binding protein T85 (T85) (Nicotiana tabacum (Common tobacco)).